The following is a 529-amino-acid chain: Extracellular signal-regulated kinase 1 (529 aa).

Disordered regions lie at residues Met-1–Ser-20 and Gln-100–Asn-131. The span at Phe-8–Ser-20 shows a compositional bias: polar residues. Low complexity predominate over residues Gln-100–Gln-117. A Protein kinase domain is found at Tyr-149–Ser-439. ATP contacts are provided by residues Ile-155–Val-163 and Lys-178. Asp-275 functions as the Proton acceptor in the catalytic mechanism. Thr-309 carries the phosphothreonine modification. Positions Thr-309–Tyr-311 match the TXY motif. Phosphotyrosine is present on Tyr-311.

The protein belongs to the protein kinase superfamily. CMGC Ser/Thr protein kinase family. MAP kinase subfamily. The cofactor is Mg(2+). Post-translationally, dually phosphorylated on Thr-309 and Tyr-311, which activates the enzyme.

The enzyme catalyses L-seryl-[protein] + ATP = O-phospho-L-seryl-[protein] + ADP + H(+). The catalysed reaction is L-threonyl-[protein] + ATP = O-phospho-L-threonyl-[protein] + ADP + H(+). With respect to regulation, activated by tyrosine and threonine phosphorylation. Functionally, kinase involved in a signal transduction pathway. This chain is Extracellular signal-regulated kinase 1 (erkA), found in Dictyostelium discoideum (Social amoeba).